A 298-amino-acid chain; its full sequence is tRNA dimethylallyltransferase 2 (298 aa).

An ATP-binding site is contributed by 10–17 (GPTASGKT). Residue 12-17 (TASGKT) participates in substrate binding. The interaction with substrate tRNA stretch occupies residues 35 to 38 (DSRQ).

The protein belongs to the IPP transferase family. In terms of assembly, monomer. It depends on Mg(2+) as a cofactor.

The catalysed reaction is adenosine(37) in tRNA + dimethylallyl diphosphate = N(6)-dimethylallyladenosine(37) in tRNA + diphosphate. Catalyzes the transfer of a dimethylallyl group onto the adenine at position 37 in tRNAs that read codons beginning with uridine, leading to the formation of N6-(dimethylallyl)adenosine (i(6)A). This Syntrophotalea carbinolica (strain DSM 2380 / NBRC 103641 / GraBd1) (Pelobacter carbinolicus) protein is tRNA dimethylallyltransferase 2.